Here is a 220-residue protein sequence, read N- to C-terminus: Putative glutathione S-transferase C1183.02 (220 aa).

The GST N-terminal domain occupies 2–81; that stretch reads FLGTLYSFKT…YFYEKGKHND (80 aa). Residues 89–216 enclose the GST C-terminal domain; that stretch reads NEVEEAEMLK…FPLELPLTVT (128 aa).

This sequence belongs to the GST superfamily.

The protein resides in the cytoplasm. The enzyme catalyses RX + glutathione = an S-substituted glutathione + a halide anion + H(+). In terms of biological role, involved in the oxidative stress response and detoxification. The polypeptide is Putative glutathione S-transferase C1183.02 (Schizosaccharomyces pombe (strain 972 / ATCC 24843) (Fission yeast)).